Reading from the N-terminus, the 298-residue chain is MPICAPSSDSSASASSGLGARVWVLHGLALGAAAAAAAVAYLYRRPTGFRSRAVGIIPARFASTRFEGKPLVPILGKPMIQRTWERVMLASSLDHVVVATDDERIAECCRGFGADVIMTSASCKNGSERCCEALKKLDKHYDIVVNIQGDEPLIEPEIIDGVVMSLQRAPDAVFSTAVTSLKPEDAFDTNRVKCVVDNLGYAIYFSRGLIPFNKSGNANPKYPYLLHLGIAGFDSKFLKIYPELPPTPLQMEEDLEQLKVLENGYRMKVIKVDHDAHGVDAPEDVEKIEALMRTRNIQ.

A helical transmembrane segment spans residues 22–42; it reads VWVLHGLALGAAAAAAAVAYL.

Belongs to the KdsB family. It depends on Mg(2+) as a cofactor. As to expression, ubiquitous.

The protein resides in the membrane. The enzyme catalyses 3-deoxy-alpha-D-manno-oct-2-ulosonate + CTP = CMP-3-deoxy-beta-D-manno-octulosonate + diphosphate. It participates in nucleotide-sugar biosynthesis; CMP-3-deoxy-D-manno-octulosonate biosynthesis; CMP-3-deoxy-D-manno-octulosonate from 3-deoxy-D-manno-octulosonate and CTP: step 1/1. Functionally, catalyzes the production of the sugar nucleotide CMP-3-deoxy-D-manno-octulosonate (CMP-KDO). CTP is the preferred nucleotide donor, and it can partially be replaced with UTP but not with ATP. Activates KDO during the biosynthesis of rhamnogalacturonan II (RG-II), a structurally complex pectic polysaccharide of the primary cell wall. RG-II is essential for the cell wall integrity of rapidly growing tissues and pollen tube growth and elongation. The protein is 3-deoxy-manno-octulosonate cytidylyltransferase of Zea mays (Maize).